Consider the following 219-residue polypeptide: Protein-L-isoaspartate O-methyltransferase (219 aa).

Ser-65 is a catalytic residue.

This sequence belongs to the methyltransferase superfamily. L-isoaspartyl/D-aspartyl protein methyltransferase family. In terms of assembly, monomer.

It is found in the cytoplasm. The enzyme catalyses [protein]-L-isoaspartate + S-adenosyl-L-methionine = [protein]-L-isoaspartate alpha-methyl ester + S-adenosyl-L-homocysteine. Its function is as follows. Catalyzes the methyl esterification of L-isoaspartyl residues in peptides and proteins that result from spontaneous decomposition of normal L-aspartyl and L-asparaginyl residues. It plays a role in the repair and/or degradation of damaged proteins. The polypeptide is Protein-L-isoaspartate O-methyltransferase (pcm) (Pyrococcus furiosus (strain ATCC 43587 / DSM 3638 / JCM 8422 / Vc1)).